Reading from the N-terminus, the 198-residue chain is Small ribosomal subunit protein uS2 (198 aa).

It belongs to the universal ribosomal protein uS2 family.

This Methanobrevibacter smithii (strain ATCC 35061 / DSM 861 / OCM 144 / PS) protein is Small ribosomal subunit protein uS2.